Reading from the N-terminus, the 238-residue chain is Thrombin-like enzyme halystase (238 aa).

One can recognise a Peptidase S1 domain in the interval 1–229; the sequence is IIGGDECNIN…HLDWIKSIIA (229 aa). Cystine bridges form between cysteine 7-cysteine 141, cysteine 28-cysteine 44, cysteine 76-cysteine 236, cysteine 120-cysteine 190, cysteine 152-cysteine 169, and cysteine 180-cysteine 205. Residue histidine 43 is the Charge relay system of the active site. N-linked (GlcNAc...) asparagine glycosylation is present at asparagine 81. The Charge relay system role is filled by aspartate 88. Asparagine 100 carries N-linked (GlcNAc...) asparagine glycosylation. Serine 184 (charge relay system) is an active-site residue.

This sequence belongs to the peptidase S1 family. Snake venom subfamily. In terms of assembly, monomer. Expressed by the venom gland.

The protein resides in the secreted. With respect to regulation, inhibited by diisopropylfluorophosphate (DFP), PMSF and leupeptin. Its function is as follows. Thrombin-like snake venom serine protease. Cleaves fibrinogen (beta chain of fibrinogen (FGB) and more slowly alpha chain (FGA)) without inducing fibrin clotting and cleaves kininogen to produce bradykinin (KNG), resulting in the reduction of blood pressure. The chain is Thrombin-like enzyme halystase from Gloydius blomhoffii (Mamushi).